The chain runs to 575 residues: TOX high mobility group box family member 3 (575 aa).

Disordered stretches follow at residues 189 to 258 (LGGA…QKPV) and 516 to 575 (QQLQ…VSIF). Residues 195-214 (SHTSPSPPASKSATPSPSSS) show a composition bias toward low complexity. Basic and acidic residues predominate over residues 222 to 238 (DANRAIGEKRTAPDSGK). Positions 239–249 (KPKTPKKKKKK) are enriched in basic residues. Residues 254 to 322 (PQKPVSAYAL…EYLKALAAYR (69 aa)) constitute a DNA-binding region (HMG box). Positions 516-526 (QQLQHMQHQSQ) are enriched in low complexity. Positions 527–541 (PSPRQHSPVTSQITS) are enriched in polar residues. Residues 548–575 (SPQPASQQHQPQIQSQTQTQVLPQVSIF) are compositionally biased toward low complexity.

In terms of assembly, homodimer. Interacts (via HGM box) with CITED1 (via C-terminus); the interaction increases estrogen-response element (ERE)-dependent transcription and protection against cell death. Interacts with CREB1 (phosphorylated form). Interacts with CREB1; the interaction is not depolarization dependent. Interacts with CREBBP (via C-terminus).

It is found in the nucleus. In terms of biological role, transcriptional coactivator of the p300/CBP-mediated transcription complex. Activates transactivation through cAMP response element (CRE) sites. Protects against cell death by inducing antiapoptotic and repressing pro-apoptotic transcripts. Stimulates transcription from the estrogen-responsive or BCL-2 promoters. Required for depolarization-induced transcription activation of the C-FOS promoter in neurons. Associates with chromatin to the estrogen-responsive C3 promoter region. This chain is TOX high mobility group box family member 3 (Tox3), found in Mus musculus (Mouse).